The chain runs to 83 residues: MKLMCMMIVAVLFLTAWTFVTADDSINGPENRRIWEKLLSKTRDEMKNPEASKLNKKECRQPGEFCFPVVAKCCGGTCLVICI.

A signal peptide spans Met1–Ala22. The propeptide occupies Asp23–Asn55. 3 disulfide bridges follow: Cys59/Cys74, Cys66/Cys78, and Cys73/Cys82.

Belongs to the conotoxin O1 superfamily. As to expression, expressed by the venom duct.

It is found in the secreted. This is Conotoxin VnMKLT1-022 from Conus ventricosus (Mediterranean cone).